A 441-amino-acid polypeptide reads, in one-letter code: Trigger factor (441 aa).

A PPIase FKBP-type domain is found at 161–246; it reads GDMVTVDFQG…VKDVKERILA (86 aa).

Belongs to the FKBP-type PPIase family. Tig subfamily.

The protein resides in the cytoplasm. The catalysed reaction is [protein]-peptidylproline (omega=180) = [protein]-peptidylproline (omega=0). Its function is as follows. Involved in protein export. Acts as a chaperone by maintaining the newly synthesized protein in an open conformation. Functions as a peptidyl-prolyl cis-trans isomerase. This Desulfotalea psychrophila (strain LSv54 / DSM 12343) protein is Trigger factor.